The sequence spans 492 residues: MIPVVALVGRPNVGKSTLFNRLTRTRDALVADFPGLTRDRKYGRAEVEGREFICIDTGGIDGTEEGVETRMAEQSLLAIEEADVVLFMVDARAGLMPADIAIAKHLRSREKPTFLVANKTDGIDVDQAMADFWSLGLGDIYPIAASHGRGVTSLLEQALLPWVDEVNPQEEVDEDAEYWAKFEAEQNGEAEEEPEDDFNPQDLPIKLAIVGRPNVGKSTLTNRILGEDRVVVYDMPGTTRDSIYIPMQRDEREYVLIDTAGVRKRGKITDVVEKFSVIKTLQAIEDANVVLLVIDAREGISDQDLSLLGFILNSGRSLVIVVNKWDGLSQEVKEQVKETLDYRLGFIDFARVHFISALHGSGVGNLFESVREAYDSATRRVSTAMLTRIMNMAAEDHQPPLVRGRRVKLKYAHAGGYNPPIVVIHGNQVKDLPDSYKRYLMNYFRKSLDVMGTPIRIQFKEGENPFANKRNTLTPNQMRKRKRLIKHIKKSK.

2 EngA-type G domains span residues Pro3–Val166 and Ile205–Thr378. GTP is bound by residues Gly9–Ser16, Asp56–Ile60, Asn118–Asp121, Gly211–Ser218, Asp258–Val262, and Asn323–Asp326. Residues Arg379 to Glu463 enclose the KH-like domain.

This sequence belongs to the TRAFAC class TrmE-Era-EngA-EngB-Septin-like GTPase superfamily. EngA (Der) GTPase family. As to quaternary structure, associates with the 50S ribosomal subunit.

In terms of biological role, GTPase that plays an essential role in the late steps of ribosome biogenesis. The protein is GTPase Der of Klebsiella pneumoniae subsp. pneumoniae (strain ATCC 700721 / MGH 78578).